The sequence spans 692 residues: DNA ligase (692 aa).

NAD(+)-binding positions include 35-39 (DLVYD), 88-89 (SL), and glutamate 117. Catalysis depends on lysine 119, which acts as the N6-AMP-lysine intermediate. NAD(+)-binding residues include arginine 140, glutamate 176, lysine 301, and lysine 325. Cysteine 416, cysteine 419, cysteine 434, and cysteine 439 together coordinate Zn(2+). One can recognise a BRCT domain in the interval 611 to 692 (LTNQSNSWAS…FDLIKNSKKT (82 aa)).

It belongs to the NAD-dependent DNA ligase family. LigA subfamily. Requires Mg(2+) as cofactor. It depends on Mn(2+) as a cofactor.

It catalyses the reaction NAD(+) + (deoxyribonucleotide)n-3'-hydroxyl + 5'-phospho-(deoxyribonucleotide)m = (deoxyribonucleotide)n+m + AMP + beta-nicotinamide D-nucleotide.. In terms of biological role, DNA ligase that catalyzes the formation of phosphodiester linkages between 5'-phosphoryl and 3'-hydroxyl groups in double-stranded DNA using NAD as a coenzyme and as the energy source for the reaction. It is essential for DNA replication and repair of damaged DNA. This chain is DNA ligase, found in Mesomycoplasma hyopneumoniae (strain 232) (Mycoplasma hyopneumoniae).